The following is a 249-amino-acid chain: Proteasome activator complex subunit 1 (249 aa).

A disordered region spans residues Pro-60–Gly-102. The span at Pro-68–Gly-98 shows a compositional bias: basic and acidic residues.

Belongs to the PA28 family. In terms of assembly, heterodimer of PSME1 and PSME2, which forms a hexameric ring. PSME1 can form homoheptamers.

Its function is as follows. Implicated in immunoproteasome assembly and required for efficient antigen processing. The PA28 activator complex enhances the generation of class I binding peptides by altering the cleavage pattern of the proteasome. This Homo sapiens (Human) protein is Proteasome activator complex subunit 1 (PSME1).